We begin with the raw amino-acid sequence, 359 residues long: 3-dehydroquinate synthase (359 aa).

NAD(+) contacts are provided by residues 71 to 76, 105 to 109, 129 to 130, K142, K151, and 169 to 172; these read DGEAHK, GVIGD, TT, and TLHT. The Zn(2+) site is built by E184, H247, and H264.

The protein belongs to the sugar phosphate cyclases superfamily. Dehydroquinate synthase family. Requires NAD(+) as cofactor. Co(2+) serves as cofactor. The cofactor is Zn(2+).

It localises to the cytoplasm. It carries out the reaction 7-phospho-2-dehydro-3-deoxy-D-arabino-heptonate = 3-dehydroquinate + phosphate. It functions in the pathway metabolic intermediate biosynthesis; chorismate biosynthesis; chorismate from D-erythrose 4-phosphate and phosphoenolpyruvate: step 2/7. In terms of biological role, catalyzes the conversion of 3-deoxy-D-arabino-heptulosonate 7-phosphate (DAHP) to dehydroquinate (DHQ). This is 3-dehydroquinate synthase from Neisseria meningitidis serogroup A / serotype 4A (strain DSM 15465 / Z2491).